Consider the following 374-residue polypeptide: Chaperone protein DnaJ (374 aa).

Residues 3-67 enclose the J domain; it reads DFYQILGVSR…ETRARYDQFG (65 aa). The segment at 99 to 118 is disordered; it reads GQSSQGGRSQRRGPQQGDDL. A compositionally biased stretch (low complexity) spans 103–115; it reads QGGRSQRRGPQQG. Residues 132–214 form a CR-type zinc finger; sequence GQQREINIPH…CGGNGVKQVR (83 aa). Residues Cys-145, Cys-148, Cys-162, Cys-165, Cys-188, Cys-191, Cys-202, and Cys-205 each coordinate Zn(2+). CXXCXGXG motif repeat units lie at residues 145-152, 162-169, 188-195, and 202-209; these read CEVCRGTG, CTTCGGSG, CPTCNGVG, and CTSCGGNG.

This sequence belongs to the DnaJ family. As to quaternary structure, homodimer. The cofactor is Zn(2+).

It localises to the cytoplasm. Participates actively in the response to hyperosmotic and heat shock by preventing the aggregation of stress-denatured proteins and by disaggregating proteins, also in an autonomous, DnaK-independent fashion. Unfolded proteins bind initially to DnaJ; upon interaction with the DnaJ-bound protein, DnaK hydrolyzes its bound ATP, resulting in the formation of a stable complex. GrpE releases ADP from DnaK; ATP binding to DnaK triggers the release of the substrate protein, thus completing the reaction cycle. Several rounds of ATP-dependent interactions between DnaJ, DnaK and GrpE are required for fully efficient folding. Also involved, together with DnaK and GrpE, in the DNA replication of plasmids through activation of initiation proteins. The protein is Chaperone protein DnaJ of Prochlorococcus marinus subsp. pastoris (strain CCMP1986 / NIES-2087 / MED4).